The primary structure comprises 139 residues: Transcription antitermination protein NusB (139 aa).

It belongs to the NusB family.

In terms of biological role, involved in transcription antitermination. Required for transcription of ribosomal RNA (rRNA) genes. Binds specifically to the boxA antiterminator sequence of the ribosomal RNA (rrn) operons. The chain is Transcription antitermination protein NusB from Idiomarina loihiensis (strain ATCC BAA-735 / DSM 15497 / L2-TR).